A 414-amino-acid chain; its full sequence is Dothistromin biosynthesis peroxidase dotB (414 aa).

The signal sequence occupies residues 1 to 18 (MHFFSAIVLTCLASTAVA). Residue cysteine 72 coordinates heme. 3 N-linked (GlcNAc...) asparagine glycosylation sites follow: asparagine 187, asparagine 241, and asparagine 328.

This sequence belongs to the chloroperoxidase family. Heme b is required as a cofactor.

Its pathway is mycotoxin biosynthesis. Peroxidase; part of the fragmented gene cluster that mediates the biosynthesis of dothistromin (DOTH), a polyketide toxin very similar in structure to the aflatoxin precursor, versicolorin B. The first step of the pathway is the conversion of acetate to norsolorinic acid (NOR) and requires the fatty acid synthase subunits hexA and hexB, as well as the polyketide synthase pksA. PksA combines a hexanoyl starter unit and 7 malonyl-CoA extender units to synthesize the precursor NOR. The hexanoyl starter unit is provided to the acyl-carrier protein (ACP) domain by the fungal fatty acid synthase hexA/hexB. The second step is the conversion of NOR to averantin (AVN) and requires the norsolorinic acid ketoreductase nor1, which catalyzes the dehydration of norsolorinic acid to form (1'S)-averantin. The cytochrome P450 monooxygenase avnA then catalyzes the hydroxylation of AVN to 5'hydroxyaverantin (HAVN). The next step is performed by adhA that transforms HAVN to averufin (AVF). Averufin might then be converted to hydroxyversicolorone by cypX and avfA. Hydroxyversicolorone is further converted versiconal hemiacetal acetate (VHA) by moxY. VHA is then the substrate for the versiconal hemiacetal acetate esterase est1 to yield versiconal (VAL). Versicolorin B synthase vbsA then converts VAL to versicolorin B (VERB) by closing the bisfuran ring. Then, the activity of the versicolorin B desaturase verB leads to versicolorin A (VERA). DotB, a predicted chloroperoxidase, may perform epoxidation of the A-ring of VERA. Alternatively, a cytochrome P450, such as cypX or avnA could catalyze this step. It is also possible that another, uncharacterized, cytochrome P450 enzyme is responsible for this step. Opening of the epoxide could potentially be achieved by the epoxide hydrolase epoA. However, epoA seems not to be required for DOTH biosynthesis, but other epoxide hydrolases may have the ability to complement this hydrolysis. Alternatively, opening of the epoxide ring could be achieved non-enzymatically. The next step is the deoxygenation of ring A to yield the 5,8-dihydroxyanthraquinone which is most likely catalyzed by the NADPH dehydrogenase encoded by ver1. The last stages of DOTH biosynthesis are proposed to involve hydroxylation of the bisfuran. OrdB and norB might have oxidative roles here. An alternative possibility is that cytochrome P450 monoogenases such as avnA and cypX might perform these steps in addition to previously proposed steps. The sequence is that of Dothistromin biosynthesis peroxidase dotB from Dothistroma septosporum (Red band needle blight fungus).